Here is a 1254-residue protein sequence, read N- to C-terminus: Protein transport protein Sec31A (1254 aa).

7 WD repeats span residues 4 to 47 (KEIN…EIFE), 64 to 111 (SSPH…AGDS), 120 to 160 (KHTG…SPMT), 166 to 206 (QPQE…LIIK), 209 to 254 (DHSN…SPLK), 258 to 298 (NHTR…VLYE), and 301 to 341 (TSTQ…NDNA). The span at 364-383 (TLPPLQLPQQTSPQSTITPL) shows a compositional bias: low complexity. The interval 364–386 (TLPPLQLPQQTSPQSTITPLKKP) is disordered. One copy of the WD 8; interaction with SEC13 repeat lies at 397–428 (SFAFGGKLVTLDNIKPTAQQPQQTAAHVVHIS). Disordered regions lie at residues 818 to 892 (PMQT…QSPA), 983 to 1008 (CFQHGGPGSPTSYLPPPGARAPGTQH), and 1058 to 1125 (PPAP…PGAP). Over residues 832–846 (AQPAAPAVPPQYYQQ) the composition is skewed to low complexity. 2 stretches are compositionally biased toward polar residues: residues 847–863 (GRSATTVTSWSNQTPTA) and 872–881 (VPSSDPQGDS). Over residues 1080–1091 (QTLQPQQQVPDQ) the composition is skewed to low complexity.

This sequence belongs to the WD repeat SEC31 family. In terms of assembly, COPII is composed of at least 5 proteins: the SEC23/24 complex, the SEC13/31 complex and SAR1. SEC13 and SEC31 make a 2:2 tetramer that forms the edge element of the COPII outer coat. The tetramer self-assembles in multiple copies to form the complete polyhedral cage. Interacts (via WD 8) with SEC13.

Its subcellular location is the cytoplasm. The protein localises to the cytoplasmic vesicle. It is found in the COPII-coated vesicle membrane. It localises to the endoplasmic reticulum membrane. Component of the coat protein complex II (COPII) which promotes the formation of transport vesicles from the endoplasmic reticulum (ER). The coat has two main functions, the physical deformation of the endoplasmic reticulum membrane into vesicles and the selection of cargo molecules. The protein is Protein transport protein Sec31A (sec31a) of Danio rerio (Zebrafish).